The following is a 287-amino-acid chain: Undecaprenyl-diphosphatase (287 aa).

The next 6 membrane-spanning stretches (helical) occupy residues 50-70, 99-119, 128-148, 206-226, 231-251, and 263-283; these read PGVS…IAYF, IAMA…KLFW, LRSV…LAVA, FLLG…DALA, AGPL…WLAI, and TWLF…WWSI.

Belongs to the UppP family.

Its subcellular location is the cell inner membrane. The enzyme catalyses di-trans,octa-cis-undecaprenyl diphosphate + H2O = di-trans,octa-cis-undecaprenyl phosphate + phosphate + H(+). Functionally, catalyzes the dephosphorylation of undecaprenyl diphosphate (UPP). Confers resistance to bacitracin. This is Undecaprenyl-diphosphatase from Parasynechococcus marenigrum (strain WH8102).